The primary structure comprises 146 residues: Cytidine deaminase (146 aa).

A CMP/dCMP-type deaminase domain is found at 13–140 (EHVQRLLLSS…ELLPASFGPE (128 aa)). 54 to 56 (NIE) contributes to the substrate binding site. Cys65 contacts Zn(2+). The active-site Proton donor is the Glu67. Residues Cys99 and Cys102 each coordinate Zn(2+).

Belongs to the cytidine and deoxycytidylate deaminase family. Homotetramer. Zn(2+) serves as cofactor.

It catalyses the reaction cytidine + H2O + H(+) = uridine + NH4(+). The enzyme catalyses 2'-deoxycytidine + H2O + H(+) = 2'-deoxyuridine + NH4(+). Functionally, this enzyme scavenges exogenous and endogenous cytidine and 2'-deoxycytidine for UMP synthesis. In Mus musculus (Mouse), this protein is Cytidine deaminase (Cda).